A 273-amino-acid polypeptide reads, in one-letter code: Undecaprenyl-diphosphatase (273 aa).

7 helical membrane passes run 54–74 (LGSI…LIGI), 90–110 (LTLI…LVFH), 116–136 (LFNP…LIAA), 156–178 (QAFM…SGAT), 190–210 (YAAS…ATVL), 222–242 (ADIP…LIAI), and 252–272 (ISFI…YVVF).

Belongs to the UppP family.

Its subcellular location is the cell inner membrane. The catalysed reaction is di-trans,octa-cis-undecaprenyl diphosphate + H2O = di-trans,octa-cis-undecaprenyl phosphate + phosphate + H(+). Catalyzes the dephosphorylation of undecaprenyl diphosphate (UPP). Confers resistance to bacitracin. The protein is Undecaprenyl-diphosphatase of Salmonella paratyphi A (strain ATCC 9150 / SARB42).